The following is a 214-amino-acid chain: Small ribosomal subunit protein eS1 (214 aa).

It belongs to the eukaryotic ribosomal protein eS1 family.

The sequence is that of Small ribosomal subunit protein eS1 from Aeropyrum pernix (strain ATCC 700893 / DSM 11879 / JCM 9820 / NBRC 100138 / K1).